A 60-amino-acid polypeptide reads, in one-letter code: Short neurotoxin 1 (60 aa).

Intrachain disulfides connect C3–C22, C17–C39, C41–C52, and C53–C58.

Belongs to the three-finger toxin family. Short-chain subfamily. Type I alpha-neurotoxin sub-subfamily. As to expression, expressed by the venom gland.

It localises to the secreted. Binds to muscle nicotinic acetylcholine receptor (nAChR) and inhibit acetylcholine from binding to the receptor, thereby impairing neuromuscular transmission. The chain is Short neurotoxin 1 from Hydrophis ornatus (Ornate reef seasnake).